The chain runs to 293 residues: Probable mediator of RNA polymerase II transcription subunit 15b (293 aa).

The protein belongs to the plant Mediator complex subunit 15 family. As to quaternary structure, component of the Mediator complex.

The protein localises to the nucleus. Its function is as follows. Component of the Mediator complex, a coactivator involved in the regulated transcription of nearly all RNA polymerase II-dependent genes. Mediator functions as a bridge to convey information from gene-specific regulatory proteins to the basal RNA polymerase II transcription machinery. The Mediator complex, having a compact conformation in its free form, is recruited to promoters by direct interactions with regulatory proteins and serves for the assembly of a functional preinitiation complex with RNA polymerase II and the general transcription factors. In Arabidopsis thaliana (Mouse-ear cress), this protein is Probable mediator of RNA polymerase II transcription subunit 15b (MED15B).